The primary structure comprises 211 residues: Uracil phosphoribosyltransferase (211 aa).

5-phospho-alpha-D-ribose 1-diphosphate contacts are provided by residues Arg-78, Arg-103, and 130-138 (DPMLATGGT). Residues Ile-195 and 200-202 (GDA) each bind uracil. A 5-phospho-alpha-D-ribose 1-diphosphate-binding site is contributed by Asp-201.

The protein belongs to the UPRTase family. The cofactor is Mg(2+).

The catalysed reaction is UMP + diphosphate = 5-phospho-alpha-D-ribose 1-diphosphate + uracil. Its pathway is pyrimidine metabolism; UMP biosynthesis via salvage pathway; UMP from uracil: step 1/1. Allosterically activated by GTP. Functionally, catalyzes the conversion of uracil and 5-phospho-alpha-D-ribose 1-diphosphate (PRPP) to UMP and diphosphate. The sequence is that of Uracil phosphoribosyltransferase from Streptomyces avermitilis (strain ATCC 31267 / DSM 46492 / JCM 5070 / NBRC 14893 / NCIMB 12804 / NRRL 8165 / MA-4680).